We begin with the raw amino-acid sequence, 357 residues long: Arginine kinase (357 aa).

The Phosphagen kinase N-terminal domain occupies Lys-9–Glu-91. Gly-64–Gly-66 is a binding site for L-arginine. In terms of domain architecture, Phosphagen kinase C-terminal spans Tyr-119–Ala-356. ATP is bound by residues Ser-122 to Arg-126 and His-185. Glu-225 is an L-arginine binding site. Arg-229 contacts ATP. Cys-271 contacts L-arginine. ATP contacts are provided by residues Arg-280 to His-284 and Arg-309 to Glu-314.

It belongs to the ATP:guanido phosphotransferase family.

The enzyme catalyses L-arginine + ATP = N(omega)-phospho-L-arginine + ADP + H(+). In terms of biological role, catalyzes the reversible transfer of high energy ATP gamma-phosphate group to L-arginine. The protein is Arginine kinase of Polybetes pythagoricus (South American huntsman spider).